Here is a 312-residue protein sequence, read N- to C-terminus: Regulation of nuclear pre-mRNA domain-containing protein 1A (312 aa).

S2 is subject to N-acetylserine. The CID domain maps to 2-133; that stretch reads SAFSEAALEK…QLKHALYGDK (132 aa). Phosphoserine occurs at positions 153, 156, and 285. Positions 244-286 form a coiled coil; that stretch reads LADFLRCQKEALAEKEHKLEEYKRKLARVSLVRKELRARIQSL.

This sequence belongs to the UPF0400 (RTT103) family. May form a heterodimer with RPRD1B. Associates with the RNA polymerase II subunit POLR2A (via CTD phosphorylated at 'Ser-2' and 'Ser-7' of the heptad repeats).

The protein resides in the nucleus. Its function is as follows. Interacts with phosphorylated C-terminal heptapeptide repeat domain (CTD) of the largest RNA polymerase II subunit POLR2A, and participates in dephosphorylation of the CTD by RPAP2. May act as a negative regulator of cyclin-D1 (CCND1) and cyclin-E (CCNE1) in the cell cycle. This Mus musculus (Mouse) protein is Regulation of nuclear pre-mRNA domain-containing protein 1A (Rprd1a).